Here is a 515-residue protein sequence, read N- to C-terminus: Bifunctional purine biosynthesis protein PurH (515 aa).

The MGS-like domain maps to Met-1–Val-145.

This sequence belongs to the PurH family.

It catalyses the reaction (6R)-10-formyltetrahydrofolate + 5-amino-1-(5-phospho-beta-D-ribosyl)imidazole-4-carboxamide = 5-formamido-1-(5-phospho-D-ribosyl)imidazole-4-carboxamide + (6S)-5,6,7,8-tetrahydrofolate. It carries out the reaction IMP + H2O = 5-formamido-1-(5-phospho-D-ribosyl)imidazole-4-carboxamide. Its pathway is purine metabolism; IMP biosynthesis via de novo pathway; 5-formamido-1-(5-phospho-D-ribosyl)imidazole-4-carboxamide from 5-amino-1-(5-phospho-D-ribosyl)imidazole-4-carboxamide (10-formyl THF route): step 1/1. It participates in purine metabolism; IMP biosynthesis via de novo pathway; IMP from 5-formamido-1-(5-phospho-D-ribosyl)imidazole-4-carboxamide: step 1/1. This chain is Bifunctional purine biosynthesis protein PurH, found in Streptococcus pyogenes serotype M18 (strain MGAS8232).